We begin with the raw amino-acid sequence, 426 residues long: Coiled-coil domain-containing protein 86 (426 aa).

Residues methionine 1–valine 426 are disordered. Position 18 is a phosphoserine (serine 18). The segment covering alanine 33–serine 49 has biased composition (basic and acidic residues). The segment covering leucine 55–glutamate 145 has biased composition (pro residues). A Phosphoserine modification is found at serine 59. Threonine 66 bears the Phosphothreonine mark. Phosphoserine is present on residues serine 67, serine 70, serine 161, serine 172, serine 183, serine 191, serine 194, serine 225, serine 252, serine 253, and serine 283. The span at glutamine 241–glutamate 255 shows a compositional bias: polar residues. Basic residues predominate over residues glycine 304–phenylalanine 320. Over residues glutamate 339–glutamate 383 the composition is skewed to basic and acidic residues. Residues alanine 346–arginine 389 are a coiled coil. Residues alanine 392–leucine 402 are compositionally biased toward basic residues. Arginine 408 is subject to Citrulline.

Citrullinated by PADI4. In terms of tissue distribution, highly expressed in testis. Also expressed in heart, liver, kidney.

The protein resides in the nucleus. Its subcellular location is the chromosome. It is found in the nucleolus. Its function is as follows. Required for proper chromosome segregation during mitosis and error-free mitotic progression. The protein is Coiled-coil domain-containing protein 86 of Mus musculus (Mouse).